Reading from the N-terminus, the 265-residue chain is uncharacterized protein (265 aa).

2 consecutive CBS domains span residues 9–64 and 67–126; these read MTKK…EKVE and MTKR…TTPK.

This is an uncharacterized protein from Methanocaldococcus jannaschii (strain ATCC 43067 / DSM 2661 / JAL-1 / JCM 10045 / NBRC 100440) (Methanococcus jannaschii).